Here is a 227-residue protein sequence, read N- to C-terminus: Enolase-phosphatase E1 (227 aa).

This sequence belongs to the HAD-like hydrolase superfamily. MasA/MtnC family. In terms of assembly, monomer. It depends on Mg(2+) as a cofactor.

The catalysed reaction is 5-methylsulfanyl-2,3-dioxopentyl phosphate + H2O = 1,2-dihydroxy-5-(methylsulfanyl)pent-1-en-3-one + phosphate. It functions in the pathway amino-acid biosynthesis; L-methionine biosynthesis via salvage pathway; L-methionine from S-methyl-5-thio-alpha-D-ribose 1-phosphate: step 3/6. The protein operates within amino-acid biosynthesis; L-methionine biosynthesis via salvage pathway; L-methionine from S-methyl-5-thio-alpha-D-ribose 1-phosphate: step 4/6. Its function is as follows. Bifunctional enzyme that catalyzes the enolization of 2,3-diketo-5-methylthiopentyl-1-phosphate (DK-MTP-1-P) into the intermediate 2-hydroxy-3-keto-5-methylthiopentenyl-1-phosphate (HK-MTPenyl-1-P), which is then dephosphorylated to form the acireductone 1,2-dihydroxy-3-keto-5-methylthiopentene (DHK-MTPene). In Azotobacter vinelandii (strain DJ / ATCC BAA-1303), this protein is Enolase-phosphatase E1.